Reading from the N-terminus, the 229-residue chain is 7-cyano-7-deazaguanine synthase (229 aa).

15–25 (LSGGLDSATVV) is an ATP binding site. The Zn(2+) site is built by cysteine 194, cysteine 204, cysteine 207, and cysteine 210.

This sequence belongs to the QueC family. Zn(2+) serves as cofactor.

It catalyses the reaction 7-carboxy-7-deazaguanine + NH4(+) + ATP = 7-cyano-7-deazaguanine + ADP + phosphate + H2O + H(+). The protein operates within purine metabolism; 7-cyano-7-deazaguanine biosynthesis. In terms of biological role, catalyzes the ATP-dependent conversion of 7-carboxy-7-deazaguanine (CDG) to 7-cyano-7-deazaguanine (preQ(0)). This chain is 7-cyano-7-deazaguanine synthase, found in Pseudomonas savastanoi pv. phaseolicola (strain 1448A / Race 6) (Pseudomonas syringae pv. phaseolicola (strain 1448A / Race 6)).